The chain runs to 113 residues: MISSVQNVSNLSMTRALGAVDTENSASSAATTMPGTAGAANGLSFASVLGGMASDAVNSLKGAESMSFAGIKGTATTREVVDSMLQAEQTLQTAIAIRDKVVSAFLEVTKMQM.

The protein belongs to the FliE family.

It localises to the bacterial flagellum basal body. The protein is Flagellar hook-basal body complex protein FliE of Rhizobium etli (strain ATCC 51251 / DSM 11541 / JCM 21823 / NBRC 15573 / CFN 42).